A 122-amino-acid polypeptide reads, in one-letter code: Small ribosomal subunit protein uS13 (122 aa).

The tract at residues 97–122 (PVRGQRTKTNARTRKGPARTVAGKKK) is disordered.

Belongs to the universal ribosomal protein uS13 family. In terms of assembly, part of the 30S ribosomal subunit. Forms a loose heterodimer with protein S19. Forms two bridges to the 50S subunit in the 70S ribosome.

Functionally, located at the top of the head of the 30S subunit, it contacts several helices of the 16S rRNA. In the 70S ribosome it contacts the 23S rRNA (bridge B1a) and protein L5 of the 50S subunit (bridge B1b), connecting the 2 subunits; these bridges are implicated in subunit movement. Contacts the tRNAs in the A and P-sites. The chain is Small ribosomal subunit protein uS13 from Pelobacter propionicus (strain DSM 2379 / NBRC 103807 / OttBd1).